Reading from the N-terminus, the 418-residue chain is CinA-like protein (418 aa).

It belongs to the CinA family.

This chain is CinA-like protein, found in Leptospira interrogans serogroup Icterohaemorrhagiae serovar Lai (strain 56601).